The chain runs to 129 residues: Small ribosomal subunit protein uS12 (129 aa).

The protein belongs to the universal ribosomal protein uS12 family. As to quaternary structure, part of the 30S ribosomal subunit. Contacts proteins S8 and S17. May interact with IF1 in the 30S initiation complex.

Its function is as follows. With S4 and S5 plays an important role in translational accuracy. In terms of biological role, interacts with and stabilizes bases of the 16S rRNA that are involved in tRNA selection in the A site and with the mRNA backbone. Located at the interface of the 30S and 50S subunits, it traverses the body of the 30S subunit contacting proteins on the other side and probably holding the rRNA structure together. The combined cluster of proteins S8, S12 and S17 appears to hold together the shoulder and platform of the 30S subunit. In Rickettsia typhi (strain ATCC VR-144 / Wilmington), this protein is Small ribosomal subunit protein uS12.